A 315-amino-acid polypeptide reads, in one-letter code: Jacalin-related lectin 10 (315 aa).

The N-terminal stretch at 1 to 23 (MVIIYIFLFLSSAIIDSTGLAKA) is a signal peptide. 2 consecutive Jacalin-type lectin domains span residues 24–165 (QKLD…YLTT) and 168–312 (PTKS…YFSP).

Belongs to the jacalin lectin family.

In Arabidopsis thaliana (Mouse-ear cress), this protein is Jacalin-related lectin 10 (JAL10).